The chain runs to 660 residues: Bifunctional polymyxin resistance protein ArnA (660 aa).

A formyltransferase ArnAFT region spans residues 1 to 304; the sequence is MKTVVFAYHD…TLGLVQGSRL (304 aa). 86–88 contacts (6R)-10-formyltetrahydrofolate; the sequence is HLI. His-104 acts as the Proton donor; for formyltransferase activity in catalysis. (6R)-10-formyltetrahydrofolate contacts are provided by residues Arg-114 and 136-140; that span reads VKRAD. The segment at 314-660 is dehydrogenase ArnADH; it reads RRTRVLILGV…RTVDLTDKPS (347 aa). NAD(+) contacts are provided by residues Asp-347 and 368 to 369; that span reads DI. UDP-alpha-D-glucuronate-binding positions include Ala-393, Tyr-398, and 432 to 433; that span reads TS. The active-site Proton acceptor; for decarboxylase activity is Glu-434. UDP-alpha-D-glucuronate is bound by residues Arg-460, Asn-492, 526 to 535, and Tyr-613; that span reads KLIDGGKQKR. The Proton donor; for decarboxylase activity role is filled by Arg-619.

This sequence in the N-terminal section; belongs to the Fmt family. UDP-L-Ara4N formyltransferase subfamily. In the C-terminal section; belongs to the NAD(P)-dependent epimerase/dehydratase family. UDP-glucuronic acid decarboxylase subfamily. In terms of assembly, homohexamer, formed by a dimer of trimers.

The enzyme catalyses UDP-alpha-D-glucuronate + NAD(+) = UDP-beta-L-threo-pentopyranos-4-ulose + CO2 + NADH. The catalysed reaction is UDP-4-amino-4-deoxy-beta-L-arabinose + (6R)-10-formyltetrahydrofolate = UDP-4-deoxy-4-formamido-beta-L-arabinose + (6S)-5,6,7,8-tetrahydrofolate + H(+). It functions in the pathway nucleotide-sugar biosynthesis; UDP-4-deoxy-4-formamido-beta-L-arabinose biosynthesis; UDP-4-deoxy-4-formamido-beta-L-arabinose from UDP-alpha-D-glucuronate: step 1/3. It participates in nucleotide-sugar biosynthesis; UDP-4-deoxy-4-formamido-beta-L-arabinose biosynthesis; UDP-4-deoxy-4-formamido-beta-L-arabinose from UDP-alpha-D-glucuronate: step 3/3. The protein operates within bacterial outer membrane biogenesis; lipopolysaccharide biosynthesis. Bifunctional enzyme that catalyzes the oxidative decarboxylation of UDP-glucuronic acid (UDP-GlcUA) to UDP-4-keto-arabinose (UDP-Ara4O) and the addition of a formyl group to UDP-4-amino-4-deoxy-L-arabinose (UDP-L-Ara4N) to form UDP-L-4-formamido-arabinose (UDP-L-Ara4FN). The modified arabinose is attached to lipid A and is required for resistance to polymyxin and cationic antimicrobial peptides. The polypeptide is Bifunctional polymyxin resistance protein ArnA (Escherichia coli (strain SE11)).